The following is a 108-amino-acid chain: Insulin-like peptide 17 (108 aa).

The N-terminal stretch at 1 to 19 is a signal peptide; sequence MFSTRGVLLLLSLMAAVAA.

It belongs to the insulin family. In terms of tissue distribution, expressed in head neurons and the uterus.

The protein resides in the secreted. Its function is as follows. Involved in the regulation of the larval diapause. The chain is Insulin-like peptide 17 from Caenorhabditis elegans.